Here is a 404-residue protein sequence, read N- to C-terminus: Cysteine desulfurase IscS (404 aa).

Pyridoxal 5'-phosphate contacts are provided by residues 75–76 (AT), N155, Q183, and 203–205 (SGH). An N6-(pyridoxal phosphate)lysine modification is found at K206. T243 provides a ligand contact to pyridoxal 5'-phosphate. C328 (cysteine persulfide intermediate) is an active-site residue. C328 provides a ligand contact to [2Fe-2S] cluster.

It belongs to the class-V pyridoxal-phosphate-dependent aminotransferase family. NifS/IscS subfamily. As to quaternary structure, homodimer. Forms a heterotetramer with IscU, interacts with other sulfur acceptors. Pyridoxal 5'-phosphate is required as a cofactor.

Its subcellular location is the cytoplasm. The enzyme catalyses (sulfur carrier)-H + L-cysteine = (sulfur carrier)-SH + L-alanine. The protein operates within cofactor biosynthesis; iron-sulfur cluster biosynthesis. Functionally, master enzyme that delivers sulfur to a number of partners involved in Fe-S cluster assembly, tRNA modification or cofactor biosynthesis. Catalyzes the removal of elemental sulfur atoms from cysteine to produce alanine. Functions as a sulfur delivery protein for Fe-S cluster synthesis onto IscU, an Fe-S scaffold assembly protein, as well as other S acceptor proteins. The polypeptide is Cysteine desulfurase IscS (Shewanella putrefaciens (strain CN-32 / ATCC BAA-453)).